The following is a 496-amino-acid chain: MYKTKIICLLLGILSGLVFAPIFFIPALFTFSYLCYIVQKSQNWQVAAKFGYLFGFGHFLSGMYWISIGVSVYIADFWWAIPFALFGLPIILAFFISANCTLSFFAKNNKYYQLIFCLLWVLFEWIRSWILTGLPWNLIGYAFSFSEILIQPLSITGIYGLSFIVIYISTSAYPVFTKKFTQLKILLASSMLILTVMVIYGAVRVSTNPTNFTDIKVRLVQPSIPQTAKWDQEEFWHNLMLHINLSENLEPTDLIIWSEAALVVPDDIPQVKLKLLNMLNSTNAILITGGISDNKKHGDQFELYSAMYALDKNNNKLFEYHKSHLVPFGEYMPLKNILPFKKLTHGLIDYKEGDGGLVYIKKYHLKIKPLICYESIFPNFVRTNNEIVDVIINITNDAWYGKSSGPYQHFHISRSRAVENGLPMIRVANNGISAIVDPIGRIVKKLNLNEINYIQGLIPQKLTTPTIFSQFGNFAMLLSIVFIILIHYLLSLIFDE.

Helical transmembrane passes span 6–26 (IICL…FFIP), 50–70 (FGYL…SIGV), 77–97 (FWWA…FFIS), 114–134 (LIFC…LTGL), 148–168 (ILIQ…VIYI), and 183–203 (LKIL…YGAV). The region spanning 220-464 (VQPSIPQTAK…QGLIPQKLTT (245 aa)) is the CN hydrolase domain. The Proton acceptor role is filled by E259. K322 is an active-site residue. Catalysis depends on C372, which acts as the Nucleophile. Residues 474-494 (FAMLLSIVFIILIHYLLSLIF) form a helical membrane-spanning segment.

This sequence belongs to the CN hydrolase family. Apolipoprotein N-acyltransferase subfamily.

Its subcellular location is the cell inner membrane. It carries out the reaction N-terminal S-1,2-diacyl-sn-glyceryl-L-cysteinyl-[lipoprotein] + a glycerophospholipid = N-acyl-S-1,2-diacyl-sn-glyceryl-L-cysteinyl-[lipoprotein] + a 2-acyl-sn-glycero-3-phospholipid + H(+). It participates in protein modification; lipoprotein biosynthesis (N-acyl transfer). Its function is as follows. Catalyzes the phospholipid dependent N-acylation of the N-terminal cysteine of apolipoprotein, the last step in lipoprotein maturation. This Rickettsia prowazekii (strain Madrid E) protein is Apolipoprotein N-acyltransferase.